Consider the following 562-residue polypeptide: Dihydroxy-acid dehydratase (562 aa).

Position 78 (Asp78) interacts with Mg(2+). Cys119 serves as a coordination point for [2Fe-2S] cluster. Residues Asp120 and Lys121 each coordinate Mg(2+). Lys121 is modified (N6-carboxylysine). Residue Cys192 coordinates [2Fe-2S] cluster. Position 449 (Glu449) interacts with Mg(2+). Ser475 serves as the catalytic Proton acceptor.

This sequence belongs to the IlvD/Edd family. Homodimer. [2Fe-2S] cluster serves as cofactor. It depends on Mg(2+) as a cofactor.

The enzyme catalyses (2R)-2,3-dihydroxy-3-methylbutanoate = 3-methyl-2-oxobutanoate + H2O. The catalysed reaction is (2R,3R)-2,3-dihydroxy-3-methylpentanoate = (S)-3-methyl-2-oxopentanoate + H2O. It functions in the pathway amino-acid biosynthesis; L-isoleucine biosynthesis; L-isoleucine from 2-oxobutanoate: step 3/4. It participates in amino-acid biosynthesis; L-valine biosynthesis; L-valine from pyruvate: step 3/4. In terms of biological role, functions in the biosynthesis of branched-chain amino acids. Catalyzes the dehydration of (2R,3R)-2,3-dihydroxy-3-methylpentanoate (2,3-dihydroxy-3-methylvalerate) into 2-oxo-3-methylpentanoate (2-oxo-3-methylvalerate) and of (2R)-2,3-dihydroxy-3-methylbutanoate (2,3-dihydroxyisovalerate) into 2-oxo-3-methylbutanoate (2-oxoisovalerate), the penultimate precursor to L-isoleucine and L-valine, respectively. The chain is Dihydroxy-acid dehydratase from Aliarcobacter butzleri (strain RM4018) (Arcobacter butzleri).